Here is a 455-residue protein sequence, read N- to C-terminus: Ribosomal protein uS12 methylthiotransferase RimO (455 aa).

The MTTase N-terminal domain maps to 10 to 126 (RKVSMISLGC…ILELIEAHDR (117 aa)). The [4Fe-4S] cluster site is built by Cys-19, Cys-55, Cys-89, Cys-164, Cys-168, and Cys-171. A Radical SAM core domain is found at 150–380 (SSPFYSTYVK…MKAQQRVSFR (231 aa)). The region spanning 383 to 451 (RALIGRVEPV…EYDLIGEIVD (69 aa)) is the TRAM domain.

The protein belongs to the methylthiotransferase family. RimO subfamily. [4Fe-4S] cluster serves as cofactor.

The protein localises to the cytoplasm. It carries out the reaction L-aspartate(89)-[ribosomal protein uS12]-hydrogen + (sulfur carrier)-SH + AH2 + 2 S-adenosyl-L-methionine = 3-methylsulfanyl-L-aspartate(89)-[ribosomal protein uS12]-hydrogen + (sulfur carrier)-H + 5'-deoxyadenosine + L-methionine + A + S-adenosyl-L-homocysteine + 2 H(+). Catalyzes the methylthiolation of an aspartic acid residue of ribosomal protein uS12. This chain is Ribosomal protein uS12 methylthiotransferase RimO, found in Syntrophotalea carbinolica (strain DSM 2380 / NBRC 103641 / GraBd1) (Pelobacter carbinolicus).